The primary structure comprises 191 residues: Protein YceI (191 aa).

Residues 1 to 22 form the signal peptide; sequence MKKSLLGLTFASLMFSAGSAVA.

The protein belongs to the UPF0312 family. Type 1 subfamily.

It is found in the periplasm. In Escherichia coli O17:K52:H18 (strain UMN026 / ExPEC), this protein is Protein YceI.